The following is a 271-amino-acid chain: Mannosyl-3-phosphoglycerate phosphatase (271 aa).

Aspartate 13 serves as the catalytic Nucleophile. Mg(2+)-binding residues include aspartate 13, aspartate 15, and aspartate 214.

Belongs to the HAD-like hydrolase superfamily. MPGP family. It depends on Mg(2+) as a cofactor.

The protein localises to the cytoplasm. It carries out the reaction 2-O-(alpha-D-mannosyl)-3-phosphoglycerate + H2O = (2R)-2-O-(alpha-D-mannosyl)-glycerate + phosphate. The protein is Mannosyl-3-phosphoglycerate phosphatase (yedP) of Escherichia coli O157:H7.